We begin with the raw amino-acid sequence, 683 residues long: UvrABC system protein B (683 aa).

The segment at 1-29 (MTDTGPLQPDRPDLDRPLSVDAPFEPAGD) is disordered. One can recognise a Helicase ATP-binding domain in the interval 39–417 (AGFESGAEKQ…PGDYERDHSE (379 aa)). 52 to 59 (GVTGSGKT) is a binding site for ATP. Positions 105–128 (YYDYYQPEAYVEQTDTYIDKDMSI) match the Beta-hairpin motif. Positions 442–604 (QVEDLIERIQ…EPRTIEKPVS (163 aa)) constitute a Helicase C-terminal domain. A compositionally biased stretch (basic and acidic residues) spans 587-603 (EFNAEHGHEPRTIEKPV). The tract at residues 587–620 (EFNAEHGHEPRTIEKPVSETNLPGSSTDTDGVAD) is disordered. Polar residues predominate over residues 604–615 (SETNLPGSSTDT). In terms of domain architecture, UVR spans 630-665 (EQLIERLETRMQEAADNLEFELAADIRDRIRELRET).

It belongs to the UvrB family. In terms of assembly, forms a heterotetramer with UvrA during the search for lesions. Interacts with UvrC in an incision complex.

The protein resides in the cytoplasm. The UvrABC repair system catalyzes the recognition and processing of DNA lesions. A damage recognition complex composed of 2 UvrA and 2 UvrB subunits scans DNA for abnormalities. Upon binding of the UvrA(2)B(2) complex to a putative damaged site, the DNA wraps around one UvrB monomer. DNA wrap is dependent on ATP binding by UvrB and probably causes local melting of the DNA helix, facilitating insertion of UvrB beta-hairpin between the DNA strands. Then UvrB probes one DNA strand for the presence of a lesion. If a lesion is found the UvrA subunits dissociate and the UvrB-DNA preincision complex is formed. This complex is subsequently bound by UvrC and the second UvrB is released. If no lesion is found, the DNA wraps around the other UvrB subunit that will check the other stand for damage. This Natronomonas pharaonis (strain ATCC 35678 / DSM 2160 / CIP 103997 / JCM 8858 / NBRC 14720 / NCIMB 2260 / Gabara) (Halobacterium pharaonis) protein is UvrABC system protein B.